The sequence spans 485 residues: Metalloprotease AprA (485 aa).

His187 is a Zn(2+) binding site. The active site involves Glu188. The Zn(2+) site is built by His191 and His197. Residues Arg268, Gly270, Thr272, Asp300, Gly302, Gly303, Asp305, Thr342, Glu344, Gly349, Gly351, Asp353, Asn358, Leu360, Asn362, Gly366, Gly367, Ala368, Gly369, Asp371, Gly375, Gly376, Gly377, Gly378, Asp380, Gly384, Gly385, Thr386, Gly387, Asp389, Asp398, Asp405, Asp415, Asp461, Thr463, Asn465, Ser467, and Asp469 each contribute to the Ca(2+) site. Hemolysin-type calcium-binding repeat units follow at residues 347 to 364 (FGGSGNDLLIGNALANVL), 365 to 382 (KGGAGNDIIYGGGGADQL), and 383 to 395 (WGGTGADTFVFGA).

Belongs to the peptidase M10B family. The cofactor is Ca(2+). Zn(2+) is required as a cofactor.

Its subcellular location is the secreted. Functionally, secreted protease which is important for P.entomophila to counteract the local immune response of Drosophila. Can degrade antimicrobial peptides (AMPs), e.g. Diptericin and Cecropin A. Thus, protects P.entomophila from the Drosophila antimicrobial peptides produced by the gut innate immune response, and promotes bacterial persistence in the Drosophila gut and killing of the host. Is responsible for maturation of pro-Monalysin to the active toxin Monalysin, by cleaving its N-terminus. The chain is Metalloprotease AprA from Pseudomonas entomophila (strain L48).